We begin with the raw amino-acid sequence, 89 residues long: Small ribosomal subunit protein uS15 (89 aa).

The protein belongs to the universal ribosomal protein uS15 family. As to quaternary structure, part of the 30S ribosomal subunit. Forms a bridge to the 50S subunit in the 70S ribosome, contacting the 23S rRNA.

Its function is as follows. One of the primary rRNA binding proteins, it binds directly to 16S rRNA where it helps nucleate assembly of the platform of the 30S subunit by binding and bridging several RNA helices of the 16S rRNA. Functionally, forms an intersubunit bridge (bridge B4) with the 23S rRNA of the 50S subunit in the ribosome. The sequence is that of Small ribosomal subunit protein uS15 from Cyanothece sp. (strain PCC 7425 / ATCC 29141).